The chain runs to 339 residues: Methionine synthase (339 aa).

Zn(2+)-binding residues include H212, C214, and C295.

The protein belongs to the archaeal MetE family. Requires Zn(2+) as cofactor.

The protein operates within amino-acid biosynthesis; L-methionine biosynthesis via de novo pathway. Its function is as follows. Catalyzes the transfer of a methyl group to L-homocysteine resulting in methionine formation. The physiological methyl donor is unknown. The chain is Methionine synthase from Sulfolobus acidocaldarius (strain ATCC 33909 / DSM 639 / JCM 8929 / NBRC 15157 / NCIMB 11770).